A 279-amino-acid polypeptide reads, in one-letter code: MLTDGSYFHLHLVSDSTGETLITVSRAVTAQYANVTPVEHVYPLVRSQKQLDRVLQEIEEAPGIVLFTLLETELVNRLEAKCQEINSPSLSIIGPVMQLFEAYLGASTMGRVGAQHTLNAEYFQRIDALNYSMMHDDGQHVEGLEEADVVLVGVSRTSKTPTSIYLANRGIRTANVPLVAGIPIPHQLETLKKPLVVSLHASPERLIQVRQNRLLSLGAGSGNDSYIDRQAVTDEVLLARKLSAKYGWSLLDVTRRSIEETAAAIMKLLADRQRQRVPE.

Gly-153–Thr-160 is an ADP binding site.

Belongs to the pyruvate, phosphate/water dikinase regulatory protein family. PDRP subfamily.

The enzyme catalyses N(tele)-phospho-L-histidyl/L-threonyl-[pyruvate, phosphate dikinase] + ADP = N(tele)-phospho-L-histidyl/O-phospho-L-threonyl-[pyruvate, phosphate dikinase] + AMP + H(+). It catalyses the reaction N(tele)-phospho-L-histidyl/O-phospho-L-threonyl-[pyruvate, phosphate dikinase] + phosphate + H(+) = N(tele)-phospho-L-histidyl/L-threonyl-[pyruvate, phosphate dikinase] + diphosphate. In terms of biological role, bifunctional serine/threonine kinase and phosphorylase involved in the regulation of the pyruvate, phosphate dikinase (PPDK) by catalyzing its phosphorylation/dephosphorylation. The protein is Putative pyruvate, phosphate dikinase regulatory protein of Rhodopseudomonas palustris (strain ATCC BAA-98 / CGA009).